Here is a 67-residue protein sequence, read N- to C-terminus: Bowman-Birk type proteinase inhibitor A6 (67 aa).

Disulfide bonds link C9–C66, C10–C29, C13–C62, C16–C27, C36–C43, and C40–C54.

It belongs to the Bowman-Birk serine protease inhibitor family. Expressed in bulb (at protein level).

Functionally, serine protease inhibitor. Strongly inhibits trypsin (Ki = 4 nM) and elastase (Ki = 4.8 nM). Also inhibits chymotrypsin with a Ki of 22 nM. Does not inhibit bacterial subtilisin. In Hyacinthus orientalis (Common hyacinth), this protein is Bowman-Birk type proteinase inhibitor A6.